Consider the following 668-residue polypeptide: Neurexin-3-beta (668 aa).

Positions 1–35 (MHLRTNPSICPGRRPAWTLWMCSLFWGCIVSSVWS) are cleaved as a signal peptide. Topologically, residues 36–593 (SSNVASSASS…EVVRESSSTT (558 aa)) are extracellular. Residues 84–284 (ATYIFGKSGG…NPNIKINGSV (201 aa)) form the Laminin G-like domain. Residues 510–529 (TASSSTGMVPKLPAGKMNNR) are disordered. Residues 594 to 614 (GMVVGIVAAAALCILILLYAM) traverse the membrane as a helical segment. Over 615-668 (YKYRNRDEGSYQVDETRNYISNSAQSNGTLMKEKQQSSKSGHKKQKNKDKEYYV) the chain is Cytoplasmic. Residues 636–668 (NSAQSNGTLMKEKQQSSKSGHKKQKNKDKEYYV) are disordered.

It belongs to the neurexin family. Processed by alpha-secretase leading to the formation of an extracellular soluble protein as well as a C-terminal membrane-embedded fragment (CTF). Proteolysis of these CTFs by gamma-secretase releases intracellular domains (ICDs) and extracellular peptides. Brain and arteries (at protein level).

It is found in the membrane. Functionally, neuronal cell surface protein that may be involved in cell recognition and cell adhesion. Plays a role in angiogenesis. The sequence is that of Neurexin-3-beta (NRXN3) from Gallus gallus (Chicken).